Consider the following 324-residue polypeptide: Zinc finger C2HC domain-containing protein 1A (324 aa).

The segment at 15–44 (ELLPCKICGRTFFPVALKKHGPICKKTATK) adopts a C2HC/C3H-type 1 zinc-finger fold. Residues cysteine 19, cysteine 22, histidine 34, and cysteine 38 each coordinate Zn(2+). Positions 43–83 (TKKRKTFDSSRQRAEGTDIPTVKPLKPRPEPPKKPSNWRRK) are disordered. Basic and acidic residues predominate over residues 48 to 58 (TFDSSRQRAEG). The C2HC/C3H-type 2 zinc finger occupies 118 to 147 (DYIQCPYCQRRFNENAADRHINFCKEQAAR). Zn(2+) contacts are provided by cysteine 122, cysteine 125, histidine 137, and cysteine 141. 2 disordered regions span residues 150 to 224 (NKGK…LSPS) and 236 to 259 (NVKP…LTNK). 2 stretches are compositionally biased toward low complexity: residues 176 to 187 (SNSPGTASSGSS) and 196 to 215 (GKTV…SSLG). Serine 222 is subject to Phosphoserine. Position 243 is a phosphothreonine (threonine 243). A Phosphoserine modification is found at serine 291.

This sequence belongs to the ZC2HC1 family. Zn(2+) serves as cofactor.

The sequence is that of Zinc finger C2HC domain-containing protein 1A (ZC2HC1A) from Pongo abelii (Sumatran orangutan).